The chain runs to 192 residues: Peptidyl-tRNA hydrolase (192 aa).

Y17 serves as a coordination point for tRNA. Catalysis depends on H22, which acts as the Proton acceptor. 3 residues coordinate tRNA: Y68, N70, and N116.

The protein belongs to the PTH family. In terms of assembly, monomer.

The protein resides in the cytoplasm. It carries out the reaction an N-acyl-L-alpha-aminoacyl-tRNA + H2O = an N-acyl-L-amino acid + a tRNA + H(+). Functionally, hydrolyzes ribosome-free peptidyl-tRNAs (with 1 or more amino acids incorporated), which drop off the ribosome during protein synthesis, or as a result of ribosome stalling. Catalyzes the release of premature peptidyl moieties from peptidyl-tRNA molecules trapped in stalled 50S ribosomal subunits, and thus maintains levels of free tRNAs and 50S ribosomes. The sequence is that of Peptidyl-tRNA hydrolase from Mycolicibacterium vanbaalenii (strain DSM 7251 / JCM 13017 / BCRC 16820 / KCTC 9966 / NRRL B-24157 / PYR-1) (Mycobacterium vanbaalenii).